Here is a 346-residue protein sequence, read N- to C-terminus: Putative aquaporin-7B (346 aa).

Residues 1–40 (MVQASGHRRSTRGSKMVSWSVIAKIQEIWCEEDERKMVRE) are Cytoplasmic-facing. The chain crosses the membrane as a helical span at residues 41-58 (FLAEFMSTYVMMVFGLGS). At 59 to 71 (VAHMVLNKTYGSY) the chain is on the extracellular side. Residues 72–89 (LGVNLGFGFGVTMGVHVA) form a helical membrane-spanning segment. Residues 90-93 (GRIS) are Cytoplasmic-facing. Residues 94-107 (GAHMNAAVTFTNCA) constitute an intramembrane region (discontinuously helical). An NPA 1 motif is present at residues 98–100 (NAA). Residues 108-115 (LGRVPWRK) are Cytoplasmic-facing. A helical transmembrane segment spans residues 116 to 136 (FPVHVLGQFLGSFLAAATIYS). Topologically, residues 137–174 (LFYTAILHFSGGELMVTGPFATAGIFATYLPDHMTLWR) are extracellular. The chain crosses the membrane as a helical span at residues 175–192 (GFLNEEWLTRMLQLCLFT). Residues 193–204 (ITDQENNPALPG) are Cytoplasmic-facing. Residues 205-221 (THALVISILVVIIRVSH) traverse the membrane as a helical segment. Residues 222 to 225 (GINT) lie on the Extracellular side of the membrane. Residues 226–239 (GYAINPSRDPPPSI) constitute an intramembrane region (discontinuously helical). Positions 230–232 (NPS) match the NPA 2 motif. The Extracellular segment spans residues 240–257 (FTFIAGWGKQVFSDGENW). The chain crosses the membrane as a helical span at residues 258 to 279 (WWVPVVAPLLGASLGGIIYLVF). At 280–346 (IGSTIPREPL…LHESMALEHF (67 aa)) the chain is on the cytoplasmic side.

The protein belongs to the MIP/aquaporin (TC 1.A.8) family. In terms of assembly, homotetramer; each monomer provides an independent glycerol/water pore.

It is found in the membrane. It carries out the reaction glycerol(in) = glycerol(out). The enzyme catalyses H2O(in) = H2O(out). Aquaglyceroporins form homotetrameric transmembrane channels, with each monomer independently mediating glycerol and water transport across the plasma membrane along their osmotic gradient. The polypeptide is Putative aquaporin-7B (Homo sapiens (Human)).